A 185-amino-acid chain; its full sequence is Ribosome-recycling factor (185 aa).

The protein belongs to the RRF family.

It is found in the cytoplasm. In terms of biological role, responsible for the release of ribosomes from messenger RNA at the termination of protein biosynthesis. May increase the efficiency of translation by recycling ribosomes from one round of translation to another. In Proteus mirabilis (strain HI4320), this protein is Ribosome-recycling factor.